A 204-amino-acid chain; its full sequence is Imidazoleglycerol-phosphate dehydratase (204 aa).

The protein belongs to the imidazoleglycerol-phosphate dehydratase family.

Its subcellular location is the cytoplasm. It catalyses the reaction D-erythro-1-(imidazol-4-yl)glycerol 3-phosphate = 3-(imidazol-4-yl)-2-oxopropyl phosphate + H2O. The protein operates within amino-acid biosynthesis; L-histidine biosynthesis; L-histidine from 5-phospho-alpha-D-ribose 1-diphosphate: step 6/9. The protein is Imidazoleglycerol-phosphate dehydratase of Rhodococcus jostii (strain RHA1).